The sequence spans 303 residues: Ribosomal RNA small subunit methyltransferase H (303 aa).

Residues 36 to 38 (CGH), Asp55, Phe81, Asp101, and Gln108 each bind S-adenosyl-L-methionine.

The protein belongs to the methyltransferase superfamily. RsmH family.

It is found in the cytoplasm. The enzyme catalyses cytidine(1402) in 16S rRNA + S-adenosyl-L-methionine = N(4)-methylcytidine(1402) in 16S rRNA + S-adenosyl-L-homocysteine + H(+). Functionally, specifically methylates the N4 position of cytidine in position 1402 (C1402) of 16S rRNA. The polypeptide is Ribosomal RNA small subunit methyltransferase H (Aster yellows witches'-broom phytoplasma (strain AYWB)).